A 241-amino-acid polypeptide reads, in one-letter code: Carboxy-S-adenosyl-L-methionine synthase (241 aa).

S-adenosyl-L-methionine contacts are provided by residues tyrosine 38, 63 to 65 (GCS), 88 to 89 (DN), 116 to 117 (DI), asparagine 131, and arginine 198.

The protein belongs to the class I-like SAM-binding methyltransferase superfamily. Cx-SAM synthase family. As to quaternary structure, homodimer.

The catalysed reaction is prephenate + S-adenosyl-L-methionine = carboxy-S-adenosyl-L-methionine + 3-phenylpyruvate + H2O. In terms of biological role, catalyzes the conversion of S-adenosyl-L-methionine (SAM) to carboxy-S-adenosyl-L-methionine (Cx-SAM). The chain is Carboxy-S-adenosyl-L-methionine synthase from Haemophilus influenzae (strain PittGG).